The following is a 161-amino-acid chain: Phosphopantetheine adenylyltransferase (161 aa).

A substrate-binding site is contributed by threonine 10. ATP is bound by residues 10–11 (TF) and histidine 18. Residues lysine 42, leucine 74, and arginine 88 each contribute to the substrate site. ATP is bound by residues 89-91 (GLR), glutamate 99, and 124-130 (NAFISSS).

This sequence belongs to the bacterial CoaD family. In terms of assembly, homohexamer. It depends on Mg(2+) as a cofactor.

It localises to the cytoplasm. It carries out the reaction (R)-4'-phosphopantetheine + ATP + H(+) = 3'-dephospho-CoA + diphosphate. It functions in the pathway cofactor biosynthesis; coenzyme A biosynthesis; CoA from (R)-pantothenate: step 4/5. Reversibly transfers an adenylyl group from ATP to 4'-phosphopantetheine, yielding dephospho-CoA (dPCoA) and pyrophosphate. This is Phosphopantetheine adenylyltransferase from Wolinella succinogenes (strain ATCC 29543 / DSM 1740 / CCUG 13145 / JCM 31913 / LMG 7466 / NCTC 11488 / FDC 602W) (Vibrio succinogenes).